A 261-amino-acid polypeptide reads, in one-letter code: Cytochrome c oxidase subunit 3 (261 aa).

Topologically, residues 1–15 are mitochondrial matrix; the sequence is MTHQTHAYHMVNPSP. The chain crosses the membrane as a helical span at residues 16 to 34; that stretch reads WPLTGALSALLMTSGLTMW. At 35–40 the chain is on the mitochondrial intermembrane side; that stretch reads FHFNST. Residues 41 to 66 traverse the membrane as a helical segment; the sequence is ILLMLGLTTNMLTMYQWWRDIIREST. Residues 67 to 72 lie on the Mitochondrial matrix side of the membrane; sequence FQGHHT. A helical transmembrane segment spans residues 73–105; the sequence is PVVQKGLRYGMILFIISEVLFFTGFFWAFYHSS. Over 106 to 128 the chain is Mitochondrial intermembrane; the sequence is LAPTPELGGCWPPTGIHPLNPLE. The chain crosses the membrane as a helical span at residues 129–152; it reads VPLLNTSVLLASGVSITWAHHSLM. The Mitochondrial matrix portion of the chain corresponds to 153-155; sequence EGH. A helical membrane pass occupies residues 156–183; sequence RNHMLQALFITIALGVYFTLLQASEYYE. The Mitochondrial intermembrane portion of the chain corresponds to 184 to 190; the sequence is APFTISD. The helical transmembrane segment at 191-223 threads the bilayer; sequence GVYGSTFFVATGFHGLHVIIGSTFLIVCFFRQL. The Mitochondrial matrix portion of the chain corresponds to 224–232; the sequence is KFHFTSSHH. A helical transmembrane segment spans residues 233 to 256; it reads FGFEAAAWYWHFVDVVWLFLYVSI. At 257–261 the chain is on the mitochondrial intermembrane side; the sequence is YWWGS.

This sequence belongs to the cytochrome c oxidase subunit 3 family. As to quaternary structure, component of the cytochrome c oxidase (complex IV, CIV), a multisubunit enzyme composed of 14 subunits. The complex is composed of a catalytic core of 3 subunits MT-CO1, MT-CO2 and MT-CO3, encoded in the mitochondrial DNA, and 11 supernumerary subunits COX4I, COX5A, COX5B, COX6A, COX6B, COX6C, COX7A, COX7B, COX7C, COX8 and NDUFA4, which are encoded in the nuclear genome. The complex exists as a monomer or a dimer and forms supercomplexes (SCs) in the inner mitochondrial membrane with NADH-ubiquinone oxidoreductase (complex I, CI) and ubiquinol-cytochrome c oxidoreductase (cytochrome b-c1 complex, complex III, CIII), resulting in different assemblies (supercomplex SCI(1)III(2)IV(1) and megacomplex MCI(2)III(2)IV(2)).

It is found in the mitochondrion inner membrane. The enzyme catalyses 4 Fe(II)-[cytochrome c] + O2 + 8 H(+)(in) = 4 Fe(III)-[cytochrome c] + 2 H2O + 4 H(+)(out). In terms of biological role, component of the cytochrome c oxidase, the last enzyme in the mitochondrial electron transport chain which drives oxidative phosphorylation. The respiratory chain contains 3 multisubunit complexes succinate dehydrogenase (complex II, CII), ubiquinol-cytochrome c oxidoreductase (cytochrome b-c1 complex, complex III, CIII) and cytochrome c oxidase (complex IV, CIV), that cooperate to transfer electrons derived from NADH and succinate to molecular oxygen, creating an electrochemical gradient over the inner membrane that drives transmembrane transport and the ATP synthase. Cytochrome c oxidase is the component of the respiratory chain that catalyzes the reduction of oxygen to water. Electrons originating from reduced cytochrome c in the intermembrane space (IMS) are transferred via the dinuclear copper A center (CU(A)) of subunit 2 and heme A of subunit 1 to the active site in subunit 1, a binuclear center (BNC) formed by heme A3 and copper B (CU(B)). The BNC reduces molecular oxygen to 2 water molecules using 4 electrons from cytochrome c in the IMS and 4 protons from the mitochondrial matrix. This Tragelaphus strepsiceros (Greater kudu) protein is Cytochrome c oxidase subunit 3 (MT-CO3).